We begin with the raw amino-acid sequence, 802 residues long: MRWDLITAIVAALVVSVLADESGQMAPYRIHTLFSVECQNYFDWQTVGLMHSFLKSGQPGPITRLLSCTDDQKKTYRGMNLAPTFEVPSWSRHPKTGDWYPAINKPVGVLYWLQHSEEAKHVDWVVILDADMIIRGPIIPWELGAERGRPFAAHYGYLVGCDNLLVRLHTKHPELCDKVGGLLAMHIDDLRVLAPLWLSKTEDVRQDTAHWTTNLTGDIYGKGWISEMYGYSFGAAEAGLKHKINDDLMIYPGYVPREGVEPVLMHYGLPFSIGNWSFTKLDHHEDNIVYDCNRLFPEPPYPREVKIMEPDPSKRRGLILSLECMNTLNEGLILRHAENGCPKPKWTKYLSFLKSKTFMELTRPKLLAPGSVHILPDQHEPPPIDEFKGTYPKIHTLFSTECTTYFDWQTVGFMHSFRQSGQPGNITRLLSCTDEALKNYKGHDLAPTHYVPSMSRHPLTGDWYPAINKPAAVVHWLHHTNIDAEYVVILDADMILRGPITPWEFKAARGRPVSTPYDYLIGCDNDLARLHTRNPEACDKVGGVIIMHIEDLRKFAMYWLLKTQEVRADKEHYGKELTGDIYESGWISEMYGYSFGAAELNLRHSINKEIMIYPGYVPEPGADYRVFHYGLEFKVGNWSFDKANWRNTDLINKCWAKFPDPPSPSAVHQTDNDLRQRDLLSIECGQKLNEALFLHHKRRNCPEPGSESTEKISVSRKVGNIETKQTQGSDETKESSGSSESEGRFSTLKLWVIALWLISGVGFLVVMLLVFSTRRGRGTTRGKGYRNKRRTSYSNTGFLDTK.

The N-terminal stretch at 1 to 19 is a signal peptide; the sequence is MRWDLITAIVAALVVSVLA. The Extracellular portion of the chain corresponds to 20-750; the sequence is DESGQMAPYR…SEGRFSTLKL (731 aa). N214, N275, N425, and N637 each carry an N-linked (GlcNAc...) asparagine glycan. Residues 699–741 form a disordered region; the sequence is RNCPEPGSESTEKISVSRKVGNIETKQTQGSDETKESSGSSES. Residues 751-771 form a helical membrane-spanning segment; that stretch reads WVIALWLISGVGFLVVMLLVF. Topologically, residues 772–802 are cytoplasmic; it reads STRRGRGTTRGKGYRNKRRTSYSNTGFLDTK. The segment covering 777 to 791 has biased composition (basic residues); it reads RGTTRGKGYRNKRRT. The interval 777 to 802 is disordered; sequence RGTTRGKGYRNKRRTSYSNTGFLDTK. A compositionally biased stretch (polar residues) spans 792 to 802; the sequence is SYSNTGFLDTK.

It localises to the endoplasmic reticulum membrane. In terms of biological role, glycosyltransferase involved in the O-galactosylation of several proteins including extensins. Catalyzes the transfer of alpha-galactosyl to Ser residues. Hydroxylation of proline residues adjacent to the serine acceptor is required for activity. The polypeptide is Peptidyl serine alpha-galactosyltransferase (Arabidopsis thaliana (Mouse-ear cress)).